Consider the following 310-residue polypeptide: Aspartate carbamoyltransferase catalytic subunit (310 aa).

Carbamoyl phosphate contacts are provided by R59 and T60. An L-aspartate-binding site is contributed by K87. 3 residues coordinate carbamoyl phosphate: R109, H137, and Q140. The L-aspartate site is built by R170 and R225. Positions 266 and 267 each coordinate carbamoyl phosphate.

The protein belongs to the aspartate/ornithine carbamoyltransferase superfamily. ATCase family. Heterododecamer (2C3:3R2) of six catalytic PyrB chains organized as two trimers (C3), and six regulatory PyrI chains organized as three dimers (R2).

It catalyses the reaction carbamoyl phosphate + L-aspartate = N-carbamoyl-L-aspartate + phosphate + H(+). It participates in pyrimidine metabolism; UMP biosynthesis via de novo pathway; (S)-dihydroorotate from bicarbonate: step 2/3. Functionally, catalyzes the condensation of carbamoyl phosphate and aspartate to form carbamoyl aspartate and inorganic phosphate, the committed step in the de novo pyrimidine nucleotide biosynthesis pathway. This chain is Aspartate carbamoyltransferase catalytic subunit, found in Pelobacter propionicus (strain DSM 2379 / NBRC 103807 / OttBd1).